The chain runs to 429 residues: E3 ubiquitin-protein ligase ZNRF4 (429 aa).

A signal peptide spans 1–27 (MPLCRPEHLMPRASRVPVAASLPLSHA). The Lumenal portion of the chain corresponds to 28–250 (VIPTQLPSRP…PPCHDLGCHP (223 aa)). The interval 30–67 (PTQLPSRPGHRPPGRPRRCPKASCLPPPVGPSSTQTAK) is disordered. Residues 37 to 49 (PGHRPPGRPRRCP) are compositionally biased toward basic residues. N-linked (GlcNAc...) asparagine glycans are attached at residues asparagine 107, asparagine 152, and asparagine 229. In terms of domain architecture, PA spans 151-223 (GNRSLGAIVL…VSEAASQDLR (73 aa)). A helical transmembrane segment spans residues 251-271 (VLTVSWVLGCTLALVVSAFFV). Residues 272-429 (LNHLWLWAQA…SSAPPEAPGQ (158 aa)) are Cytoplasmic-facing. The segment at 309–352 (CAICLDEYEEGDQLKILPCSHTYHCKCIDPWFSQAPRRSCPVCK) adopts an RING-type; atypical zinc-finger fold.

As to quaternary structure, interacts with CANX.

It is found in the endoplasmic reticulum membrane. It carries out the reaction S-ubiquitinyl-[E2 ubiquitin-conjugating enzyme]-L-cysteine + [acceptor protein]-L-lysine = [E2 ubiquitin-conjugating enzyme]-L-cysteine + N(6)-ubiquitinyl-[acceptor protein]-L-lysine.. The protein operates within protein modification; protein ubiquitination. Functionally, E3 ubiquitin-protein ligase that acts as a negative regulator of NOD2 signaling by mediating ubiquitination and degradation of RIPK2. Also catalyzes ubiquitination and proteasomal degradation of CANX within the endoplasmic reticulum. Could have a role in spermatogenesis. The polypeptide is E3 ubiquitin-protein ligase ZNRF4 (Homo sapiens (Human)).